The chain runs to 333 residues: 4-hydroxyproline epimerase (333 aa).

The Proton acceptor role is filled by cysteine 90. Substrate-binding positions include 91 to 92 and aspartate 249; that span reads GH. The Proton donor role is filled by cysteine 253. 254–255 serves as a coordination point for substrate; it reads GT.

It belongs to the proline racemase family. As to quaternary structure, homodimer.

It catalyses the reaction trans-4-hydroxy-L-proline = cis-4-hydroxy-D-proline. Its function is as follows. Allows intracellular utilization of 4-hydroxyproline, one of the major constituents of host collagen, by converting 4-hydroxy-L-proline to 4-hydroxy-D-proline, which can be further metabolized by intracellular 4-hydroxy-D-proline oxidases. Strong B-cell mitogen. Plays an important role in the regulation of intra- and extracellular amino acid pools, allowing the bacterium to profit from host precursors and enzymatic pathways. This chain is 4-hydroxyproline epimerase, found in Brucella canis (strain ATCC 23365 / NCTC 10854 / RM-666).